Reading from the N-terminus, the 199-residue chain is UPF0301 protein Anae109_0457 (199 aa).

This sequence belongs to the UPF0301 (AlgH) family.

The chain is UPF0301 protein Anae109_0457 from Anaeromyxobacter sp. (strain Fw109-5).